The following is a 314-amino-acid chain: Serine protease 46 (314 aa).

Residues 44-281 (VVNGKAVEVG…FTQWIKRQIG (238 aa)) form the Peptidase S1 domain. C69 and C85 are disulfide-bonded. Active-site charge relay system residues include H84 and D130. 3 disulfides stabilise this stretch: C164–C239, C197–C219, and C229–C257. S233 serves as the catalytic Charge relay system. A helical transmembrane segment spans residues 293–313 (FLSPFILTGYILLVSLGSLWL).

This sequence belongs to the peptidase S1 family.

The protein localises to the membrane. The protein is Serine protease 46 (Prss46) of Mus musculus (Mouse).